The chain runs to 122 residues: Urocortin (122 aa).

Residues 1-25 (MIQRGRATLLVALLLLAQLRPESSQ) form the signal peptide. Positions 26–80 (WSPAAAAATGVQDPNLRWSPGVRNQGGGVRALLLLLAERFPRRAGSEPAGERQRR) are excised as a propeptide. Residue Val120 is modified to Valine amide.

It belongs to the sauvagine/corticotropin-releasing factor/urotensin I family. In terms of assembly, interacts with CRHR1 and CRHR2 (via their N-terminal extracellular domain). In terms of tissue distribution, in the organ of Corti, detected in the inner hair cell region (at protein level). Expressed in skin (at protein level).

It is found in the secreted. Functionally, acts in vitro to stimulate the secretion of adrenocorticotropic hormone (ACTH). Binds with high affinity to CRF receptor types 1, 2-alpha, and 2-beta. Plays a role in the establishment of normal hearing thresholds. Reduces food intake and regulates ghrelin levels in gastric body and plasma. The chain is Urocortin (Ucn) from Mus musculus (Mouse).